We begin with the raw amino-acid sequence, 275 residues long: MYYFYSPEMFAPYQWGLERDVSYAYMPYNSFYYGDYINSLPYAYIPQNYEVQMKADDRGSWTPFSWVEKYAYAFSGPYNKAEVALTFDDGPDLEFTPKILDKLKQHNVKATFFLLGENAEKFPNIVKRIANEGHVIGNHTYSHPNLAKVNEDEYRNQIIKTEEILNRLAGYAPKFIRPPYGEILENQLKWATEQNFMIVQWSVDTVDWKGVSADTITNNVLGNSFPGSVILQHSTPGGHLQGSVDALDKIIPQLKTKGARFVTLPSMFQTSKERK.

One can recognise a NodB homology domain in the interval 81–262 (AEVALTFDDG…QLKTKGARFV (182 aa)). Asp88 acts as the Proton acceptor in catalysis. 3 residues coordinate Zn(2+): Asp89, His139, and His143. A 2-hydroxyproline; partial modification is found at Pro179. His233 (proton donor) is an active-site residue.

It belongs to the polysaccharide deacetylase family. Requires Zn(2+) as cofactor. Post-translationally, hydroxylated on Pro-179. Hydroxylation alters the active site and enhances significantly deacetylase activity, probably by creating a more favorable environment for transition-state stabilization. It might be autocatalytic.

It catalyses the reaction peptidoglycan-N-acetyl-D-glucosamine + H2O = peptidoglycan-D-glucosamine + acetate.. With respect to regulation, deacetylase activity is stimulated by hydroxylation on Pro-179. Inhibited by CuCl(2) and ZnCl(2). Inhibited by the hydroxamate N-hydroxy-4-(naphthalene-1-yl)benzamide (NHNB). In terms of biological role, catalyzes the deacetylation of N-acetylglucosamine (GlcNAc) residues in peptidoglycan. Also acts on soluble chitin substrates and N-acetylchitooligomers. Acts on cell wall peptidoglycan from the Gram-positive bacteria B.cereus and B.subtilis and the Gram-negative bacterium H.pylori. Not active on acetylated xylan. This Bacillus cereus (strain ATCC 14579 / DSM 31 / CCUG 7414 / JCM 2152 / NBRC 15305 / NCIMB 9373 / NCTC 2599 / NRRL B-3711) protein is Peptidoglycan-N-acetylglucosamine deacetylase BC_1960.